The chain runs to 402 residues: MTEPGTSVSAPVAFPQDRTCPYDPPTAYDPLREGRPLSRVSLYDGRSVWVVTGHAAARALLSDQRLSSDRTLPRFPATTERFEAVRTRRVALLGVDDPEHRTQRRMLVPSFTLKRAAALRPRIQETVDGLLDAMEAQGPPAELVSAFALPLPSMVICALLGVPYADHDFFESQSRRLLRGPGIAEVQDARAQLDDYLYALIDRKRKEPGDGLLDDLIQEQLNRGTVDRAELVSLATLLLIAGHETTANMISLGTFTLLRHPEQLAELRAEPGLMPAAVEELLRFLSIADGLLRVATEDIEVAGTTIRADEGVVFATSVINRDAAGFAEPDALDWHRSARHHVAFGFGIHQCLGQNLARAEMEIALGTLFERLPGLRLAAPADEIPFKPGDTIQGMLELPVTW.

The disordered stretch occupies residues 1 to 28 (MTEPGTSVSAPVAFPQDRTCPYDPPTAY). C351 is a binding site for heme.

This sequence belongs to the cytochrome P450 family. Heme is required as a cofactor.

It catalyses the reaction 1-deoxypentalenate + reduced 2[4Fe-4S]-[ferredoxin] + O2 + 2 H(+) = pentalenate + oxidized 2[4Fe-4S]-[ferredoxin] + H2O. It participates in antibiotic biosynthesis; neopentalenolactone biosynthesis. Its function is as follows. Catalyzes the conversion of 1-deoxypentalenic acid to pentalenic acid in the biosynthesis of neopentalenolactone antibiotic. In Streptomyces avermitilis (strain ATCC 31267 / DSM 46492 / JCM 5070 / NBRC 14893 / NCIMB 12804 / NRRL 8165 / MA-4680), this protein is Pentalenic acid synthase (cyp28).